Consider the following 72-residue polypeptide: MAKEESIEIEGVILEALPNAQFKVELENGLVVLAHVSGKIRMHYIRILPGDKVKVQISPYDISKGRITYRYK.

An S1-like domain is found at 1–72 (MAKEESIEIE…SKGRITYRYK (72 aa)).

Belongs to the IF-1 family. As to quaternary structure, component of the 30S ribosomal translation pre-initiation complex which assembles on the 30S ribosome in the order IF-2 and IF-3, IF-1 and N-formylmethionyl-tRNA(fMet); mRNA recruitment can occur at any time during PIC assembly.

It is found in the cytoplasm. Its function is as follows. One of the essential components for the initiation of protein synthesis. Stabilizes the binding of IF-2 and IF-3 on the 30S subunit to which N-formylmethionyl-tRNA(fMet) subsequently binds. Helps modulate mRNA selection, yielding the 30S pre-initiation complex (PIC). Upon addition of the 50S ribosomal subunit IF-1, IF-2 and IF-3 are released leaving the mature 70S translation initiation complex. The polypeptide is Translation initiation factor IF-1 (Chlorobium phaeovibrioides (strain DSM 265 / 1930) (Prosthecochloris vibrioformis (strain DSM 265))).